Here is a 20-residue protein sequence, read N- to C-terminus: Dahlein-5.1 (20 aa).

As to expression, expressed by the skin dorsal glands.

It is found in the secreted. Functionally, has no antimicrobial activity. Strongly inhibits the formation of NO by neuronal nitric oxide synthase at micromolar concentrations. Acts by a non-competitive mechanism, probably by binding to calcium/calmodulin and as a consequence blocking calmodulin attachment to nNOS. In Ranoidea dahlii (Dahl's aquatic frog), this protein is Dahlein-5.1.